The following is a 1197-amino-acid chain: SRC kinase signaling inhibitor 1 (1197 aa).

Residues 19-45 (AEGRARSPREEVGPRDPGGRGEPDPER) show a composition bias toward basic and acidic residues. Residues 19 to 80 (AEGRARSPRE…GGSGGRRFSN (62 aa)) are disordered. 2 positions are modified to phosphoserine: serine 47 and serine 52. Residues 65 to 75 (LGGGGSGGSGG) are compositionally biased toward gly residues. At serine 79 the chain carries Phosphoserine. Phosphothreonine is present on threonine 86. 7 positions are modified to phosphoserine: serine 87, serine 98, serine 178, serine 200, serine 204, serine 214, and serine 260. Tyrosine 276 carries the phosphotyrosine modification. Positions 319-415 (ASRESSPTRR…RRDVKPDEDL (97 aa)) are disordered. Residues 321 to 331 (RESSPTRRLNN) show a composition bias toward polar residues. The segment covering 332 to 341 (LSPASHLASS) has biased composition (low complexity). Phosphoserine occurs at positions 333, 342, and 359. The segment covering 348–366 (PSGLPSGLPSGSPSRSRLS) has biased composition (low complexity). 2 positions are modified to omega-N-methylarginine: arginine 364 and arginine 371. Residues serine 378, serine 397, and serine 399 each carry the phosphoserine modification. Residues 391–400 (PTSQGVSPSP) show a composition bias toward polar residues. Basic and acidic residues predominate over residues 404–415 (LERRDVKPDEDL). Tyrosine 431 bears the Phosphotyrosine mark. Residues 501–676 (GFRLPPSSPQ…AVSSTPAGQP (176 aa)) are disordered. Pro residues predominate over residues 520 to 531 (GGPPPPHSPYSG). Phosphoserine is present on residues serine 527, serine 530, and serine 534. Omega-N-methylarginine is present on arginine 535. Serine 537, serine 547, serine 549, serine 551, and serine 556 each carry phosphoserine. The span at 595 to 607 (KDTETRERMEAME) shows a compositional bias: basic and acidic residues. Phosphoserine is present on residues serine 631 and serine 655. Residues threonine 658 and threonine 671 each carry the phosphothreonine modification. The tract at residues 681 to 731 (RLQMQMHLRGLQNSASDLRGQLQQLRKLQLQNQESVRALLKRTEAELSMRV) is interaction with SNAP25. Coiled-coil stretches lie at residues 688 to 708 (LRGLQNSASDLRGQLQQLRKL) and 760 to 780 (EELITQQLNDLEKSVEKIQRD). Residues serine 878 and serine 900 each carry the phosphoserine modification. Disordered stretches follow at residues 891–949 (GLDF…ERDW) and 983–1065 (DCAS…VVTS). Threonine 918 is subject to Phosphothreonine. Residue serine 1021 is modified to Phosphoserine. A compositionally biased stretch (pro residues) spans 1036–1045 (KSPPPPPPRR). Phosphoserine occurs at positions 1077 and 1094. Positions 1141-1163 (SRLKAAQGPAGSPDKGKHGKQRT) are disordered.

This sequence belongs to the SRCIN1 family. In terms of assembly, interacts with BCAR1/p130Cas through its C-terminal domain and with CSK, CTTN and SRC. Also interacts with MAPRE3/EB3, SORBS3/vinexin and the N-terminal coiled-coil region of SNAP25. Tyrosine-phosphorylated in response to EGF and to cell adhesion to integrin ligands. In terms of tissue distribution, expressed exclusively in brain. Abundant in telencephalon and expressed moderately in cerebellum, hypothalamus, thalamus, superior and inferior colliculi, and olfactory bulb. No expression detected in medulla oblongata, spinal cord or pituitary gland. Enriched in the neuropil rather than soma in the thalamus, corpus striatum and cerebral cortex. Detected in astrocytes.

The protein localises to the cytoplasm. The protein resides in the cytoskeleton. It is found in the cell projection. It localises to the axon. Its subcellular location is the dendrite. The protein localises to the presynapse. The protein resides in the postsynapse. It is found in the postsynaptic density. Its function is as follows. Acts as a negative regulator of SRC by activating CSK which inhibits SRC activity and downstream signaling, leading to impaired cell spreading and migration. Regulates dendritic spine morphology. Involved in calcium-dependent exocytosis. May play a role in neurotransmitter release or synapse maintenance. This chain is SRC kinase signaling inhibitor 1, found in Rattus norvegicus (Rat).